Reading from the N-terminus, the 344-residue chain is Aspartate carbamoyltransferase catalytic subunit (344 aa).

Residues 1 to 30 (MPESPPLPKRSPLMTSSTTRPASDYPPGGD) form a disordered region. 2 residues coordinate carbamoyl phosphate: arginine 88 and threonine 89. Lysine 116 contacts L-aspartate. Carbamoyl phosphate contacts are provided by arginine 138, histidine 166, and glutamine 169. Residues arginine 199 and arginine 253 each contribute to the L-aspartate site. Residues glycine 294 and proline 295 each contribute to the carbamoyl phosphate site.

The protein belongs to the aspartate/ornithine carbamoyltransferase superfamily. ATCase family. As to quaternary structure, heterododecamer (2C3:3R2) of six catalytic PyrB chains organized as two trimers (C3), and six regulatory PyrI chains organized as three dimers (R2).

The enzyme catalyses carbamoyl phosphate + L-aspartate = N-carbamoyl-L-aspartate + phosphate + H(+). It functions in the pathway pyrimidine metabolism; UMP biosynthesis via de novo pathway; (S)-dihydroorotate from bicarbonate: step 2/3. Its function is as follows. Catalyzes the condensation of carbamoyl phosphate and aspartate to form carbamoyl aspartate and inorganic phosphate, the committed step in the de novo pyrimidine nucleotide biosynthesis pathway. This Sphingopyxis alaskensis (strain DSM 13593 / LMG 18877 / RB2256) (Sphingomonas alaskensis) protein is Aspartate carbamoyltransferase catalytic subunit.